Reading from the N-terminus, the 119-residue chain is Large ribosomal subunit protein bL20 (119 aa).

Belongs to the bacterial ribosomal protein bL20 family.

Its function is as follows. Binds directly to 23S ribosomal RNA and is necessary for the in vitro assembly process of the 50S ribosomal subunit. It is not involved in the protein synthesizing functions of that subunit. This Streptococcus suis (strain 98HAH33) protein is Large ribosomal subunit protein bL20.